A 245-amino-acid chain; its full sequence is 1-(5-phosphoribosyl)-5-[(5-phosphoribosylamino)methylideneamino] imidazole-4-carboxamide isomerase (245 aa).

Residue aspartate 7 is the Proton acceptor of the active site. Residue aspartate 129 is the Proton donor of the active site.

The protein belongs to the HisA/HisF family.

Its subcellular location is the cytoplasm. It carries out the reaction 1-(5-phospho-beta-D-ribosyl)-5-[(5-phospho-beta-D-ribosylamino)methylideneamino]imidazole-4-carboxamide = 5-[(5-phospho-1-deoxy-D-ribulos-1-ylimino)methylamino]-1-(5-phospho-beta-D-ribosyl)imidazole-4-carboxamide. It functions in the pathway amino-acid biosynthesis; L-histidine biosynthesis; L-histidine from 5-phospho-alpha-D-ribose 1-diphosphate: step 4/9. The sequence is that of 1-(5-phosphoribosyl)-5-[(5-phosphoribosylamino)methylideneamino] imidazole-4-carboxamide isomerase from Escherichia coli (strain ATCC 8739 / DSM 1576 / NBRC 3972 / NCIMB 8545 / WDCM 00012 / Crooks).